Reading from the N-terminus, the 361-residue chain is Free fatty acid receptor 4 (361 aa).

The Extracellular segment spans residues 1–45 (MSPECARAAGDAPLRSLEQANRTRFSFFSDVKGDHRLLLAAVETT). N21 carries an N-linked (GlcNAc...) asparagine glycan. Residues 46–66 (VLALIFAVSLLGNVCALVLVA) form a helical membrane-spanning segment. At 67 to 77 (RRRRRGTTACL) the chain is on the cytoplasmic side. The chain crosses the membrane as a helical span at residues 78-98 (VLNLFCADLLFISAIPLVLAV). Residues 99–112 (RWTEAWLLGPVACH) are Extracellular-facing. C111 and C194 are oxidised to a cystine. The helical transmembrane segment at 113–133 (LLFYLMTLSGSVTILTLAAVS) threads the bilayer. The Cytoplasmic portion of the chain corresponds to 134-156 (LERMVCIVHLQRGVRGPGRRARA). The chain crosses the membrane as a helical span at residues 157–177 (VLLTLIWGYSAVAALPLCVFF). Residues 178–204 (RVVPQRLPGADQEISICTLIWPTIAGE) are Extracellular-facing. Residues 205–225 (ISWDVSFVTLNFLVPGLVIVI) traverse the membrane as a helical segment. The Cytoplasmic portion of the chain corresponds to 226–268 (SYSKILQITKASRKRLTVSLAYSESHQIRVSQQDFRLFRTLFL). Residues 269-289 (LMVSFFIMWSPIIITILLILI) traverse the membrane as a helical segment. Residues 290 to 295 (QNFKQD) lie on the Extracellular side of the membrane. Residues 296–316 (LVIWPSLFFWVVAFTFANSAL) traverse the membrane as a helical segment. At 317–361 (NPILYNMTLCRNEWKKIFCCFWFPEKGAILTDTSVKRNDLSVISG) the chain is on the cytoplasmic side. T347 and T349 each carry phosphothreonine. 3 positions are modified to phosphoserine: S350, S357, and S360.

Belongs to the G-protein coupled receptor 1 family. In terms of assembly, interacts (via C-terminus) with ARRB2 following LCFAs stimulation. Post-translationally, phosphorylated at two clusters of Ser and Thr residues located in the intracellular C-terminus. Prerequisite for FFAR4 internalization via an ARRB2-dependent pathway. As to expression, highly expressed in lung and colon.

The protein resides in the cell membrane. It is found in the endosome membrane. The protein localises to the lysosome membrane. Its subcellular location is the cell projection. It localises to the cilium membrane. In terms of biological role, G-protein-coupled receptor for long-chain fatty acids (LCFAs) with a major role in adipogenesis, energy metabolism and inflammation. Signals via G-protein and beta-arrestin pathways. LCFAs sensing initiates activation of phosphoinositidase C-linked G proteins GNAQ and GNA11 (G(q)/G(11)), inducing a variety of cellular responses via second messenger pathways such as intracellular calcium mobilization, modulation of cyclic adenosine monophosphate (cAMP) production, and mitogen-activated protein kinases (MAPKs). After LCFAs binding, associates with beta-arrestin ARRB2 that acts as an adapter protein coupling the receptor to specific downstream signaling pathways, as well as mediating receptor endocytosis. In response to dietary fats, plays an important role in the regulation of adipocyte proliferation and differentiation. Acts as a receptor for omega-3 polyunsaturated fatty acids (PUFAs) at primary cilium of perivascular preadipocytes, initiating an adipogenic program via cAMP and CTCF-dependent chromatin remodeling that ultimately results in transcriptional activation of adipogenic genes and cell cycle entry. Induces differentiation of brown and beige adipocytes probably via autocrine and endocrine functions of FGF21 hormone. Contributes to the thermogenic activation of brown adipose tissue and the browning of white adipose tissue. Activates brown adipocytes by initiating intracellular calcium signaling leading to mitochondrial depolarization and fission, and overall increased mitochondrial respiration. Consequently stimulates fatty acid uptake and oxidation in mitochondria together with UCP1-mediated thermogenic respiration, eventually reducing fat mass. Regulates bi-potential differentiation of bone marrow mesenchymal stem cells toward osteoblasts or adipocytes likely by up-regulating distinct integrins. In response to dietary fats regulates hormone secretion and appetite. Stimulates GIP and GLP1 secretion from enteroendocrine cells as well as GCG secretion in pancreatic alpha cells, thereby playing a role in the regulation of blood glucose levels. Negatively regulates glucose-induced SST secretion in pancreatic delta cells. Mediates LCFAs inhibition of GHRL secretion, an appetite-controlling hormone. In taste buds, contributes to sensing of dietary fatty acids by the gustatory system. During the inflammatory response, promotes anti-inflammatory M2 macrophage differentiation in adipose tissue. Mediates the anti-inflammatory effects of omega-3 PUFAs via inhibition of NLRP3 inflammasome activation. In this pathway, interacts with adapter protein ARRB2 and inhibits the priming step triggered by Toll-like receptors (TLRs) at the level of TAK1 and TAB1. Further inhibits the activation step when ARRB2 directly associates with NLRP3, leading to inhibition of pro-inflammatory cytokine release. Mediates LCFAs anti-apoptotic effects. The chain is Free fatty acid receptor 4 (FFAR4) from Macaca fascicularis (Crab-eating macaque).